The chain runs to 75 residues: Translational regulator CsrA (75 aa).

It belongs to the CsrA/RsmA family. Homodimer; the beta-strands of each monomer intercalate to form a hydrophobic core, while the alpha-helices form wings that extend away from the core.

Its subcellular location is the cytoplasm. Its function is as follows. A translational regulator that binds mRNA to regulate translation initiation and/or mRNA stability. Usually binds in the 5'-UTR at or near the Shine-Dalgarno sequence preventing ribosome-binding, thus repressing translation. Its main target seems to be the major flagellin gene, while its function is anatagonized by FliW. The polypeptide is Translational regulator CsrA (Alkaliphilus metalliredigens (strain QYMF)).